A 219-amino-acid chain; its full sequence is Flagellin B4 (219 aa).

Residues 1–5 (MHRKG) constitute a propeptide that is removed on maturation.

Belongs to the archaeal flagellin family.

It localises to the archaeal flagellum. Its function is as follows. Flagellin is the subunit protein which polymerizes to form the filaments of archaeal flagella. The polypeptide is Flagellin B4 (flaB4) (Pyrococcus abyssi (strain GE5 / Orsay)).